We begin with the raw amino-acid sequence, 312 residues long: MTMKRKKISVIGAGFTGATTAFILAQKELGDVVLVDIPQLENPTKGKALDMLESSPVLGFDANIIGTSDYADTADSDIVVITAGIARKPGMSRDDLVTTNQKIMKQVTKEVVKYSPNCYIIVLTNPVDAMTYTVFKESGFPKNRVIGQSGVLDTARFRTFVAQELNISVKDVTGFVLGGHGDDMVPLVRYSYAGGIPLEKLIPKDRLDAIVERTRKGGGEIVNLLGNGSAYYAPAASLAEMVEAIIKDQRRILPAIAYLEGEYGYEGIYLGVPTILGGNGIEKVIELELTEEEKAALAKSVESVKNVMRVLE.

NAD(+) contacts are provided by residues 12 to 17 and D36; that span reads GAGFTG. Positions 87 and 93 each coordinate substrate. Residues N100 and 123-125 each bind NAD(+); that span reads LTN. N125 contributes to the substrate binding site. A Phosphoserine modification is found at S149. R156 contacts substrate. H180 functions as the Proton acceptor in the catalytic mechanism.

This sequence belongs to the LDH/MDH superfamily. MDH type 3 family.

The catalysed reaction is (S)-malate + NAD(+) = oxaloacetate + NADH + H(+). Catalyzes the reversible oxidation of malate to oxaloacetate. This is Malate dehydrogenase from Geobacillus sp. (strain WCH70).